We begin with the raw amino-acid sequence, 206 residues long: Guanylate kinase (206 aa).

Residues 6–184 (GNLFILSAPS…ALTDIETIVM (179 aa)) enclose the Guanylate kinase-like domain. Position 13-20 (13-20 (APSGAGKS)) interacts with ATP.

Belongs to the guanylate kinase family.

The protein resides in the cytoplasm. It catalyses the reaction GMP + ATP = GDP + ADP. Functionally, essential for recycling GMP and indirectly, cGMP. This chain is Guanylate kinase, found in Pseudoalteromonas translucida (strain TAC 125).